Consider the following 281-residue polypeptide: 2-dehydro-3-deoxyphosphooctonate aldolase (281 aa).

Belongs to the KdsA family.

The protein localises to the cytoplasm. It carries out the reaction D-arabinose 5-phosphate + phosphoenolpyruvate + H2O = 3-deoxy-alpha-D-manno-2-octulosonate-8-phosphate + phosphate. Its pathway is carbohydrate biosynthesis; 3-deoxy-D-manno-octulosonate biosynthesis; 3-deoxy-D-manno-octulosonate from D-ribulose 5-phosphate: step 2/3. It functions in the pathway bacterial outer membrane biogenesis; lipopolysaccharide biosynthesis. In Pseudomonas entomophila (strain L48), this protein is 2-dehydro-3-deoxyphosphooctonate aldolase.